The following is a 1216-amino-acid chain: SPOC domain-containing protein 1 (1216 aa).

5 disordered regions span residues 1 to 74 (MSQA…RAAG), 166 to 216 (EARD…GAHS), 236 to 325 (NLLS…PPQS), 348 to 462 (RTGS…PRLE), and 511 to 601 (SSPS…QQEK). Residues 36–50 (PGLSPDGPGASSGPG) show a composition bias toward low complexity. The segment covering 177–190 (CDRRSPTLSKEEPP) has biased composition (basic and acidic residues). Over residues 204–213 (RVRKKWRRQG) the composition is skewed to basic residues. Gly residues predominate over residues 266–278 (SGPGEPGGSGAGC). The span at 314-325 (SLSSAAQAPPQS) shows a compositional bias: low complexity. Residues 436–452 (RGTDRSSDNSHQDRPEE) show a composition bias toward basic and acidic residues. Acidic residues predominate over residues 581–592 (EAEEDSLPEQPE). Positions 608-728 (VRGTVVRSMQ…IIEQQQKEPC (121 aa)) constitute a TFIIS central domain. The tract at residues 823 to 850 (QTPMPAPEMPKTRELSPTEPQDRVPPSG) is disordered. Over residues 832–844 (PKTRELSPTEPQD) the composition is skewed to basic and acidic residues. Residues 867-970 (WEGVLDMFSI…VEHMGMVLLP (104 aa)) form the SPOC domain. A compositionally biased stretch (basic and acidic residues) spans 1046–1055 (RYYQPDDRRP). Disordered stretches follow at residues 1046–1140 (RYYQ…QHFH) and 1176–1216 (PRPL…PRKA).

As to quaternary structure, interacts with DNMT3A, DNMT3C and DNMT3L. Interacts with C19orf84. Interacts with SPIN1; promoting recruitment to transposons marked with histone H3 trimethylated at both 'Lys-4' and 'Lys-9' (H3K4me3K9me3).

It localises to the nucleus. The protein resides in the chromosome. Its function is as follows. Protein adapter that acts as an essential executor of PIWIL4-piRNA pathway directed transposon DNA methylation and silencing in the male embryonic germ cells. Recruited to young transposons, which are specifically marked with histone H3 trimethylated at both 'Lys-4' and 'Lys-9' (H3K4me3K9me3), via its association with SPIN1 chromatin reader, and associates with the de novo DNA methylation machinery and repressive chromatin remodeling complexes. Following this, PIWIL4 engages with nascent transposable element transcript to direct piRNA-directed DNA methylation. Not required for piRNA biosynthesis. The polypeptide is SPOC domain-containing protein 1 (Homo sapiens (Human)).